Here is an 832-residue protein sequence, read N- to C-terminus: Tuftelin-interacting protein 11 (832 aa).

Disordered regions lie at residues 1 to 21 (MSMS…GVEI) and 33 to 145 (NEFN…GNWE). Basic and acidic residues-rich tracts occupy residues 36–49 (NPDR…KEEA) and 88–99 (TAAEEKAEREGS). Residues 121–130 (TGGSFKTSQR) are compositionally biased toward polar residues. Residues 148–194 (TRGIGQKLLQKMGYVPGKGLGKNAQGIVNPIEAKLRKGKGAVGAYGS) enclose the G-patch domain. Position 209 is a phosphoserine (Ser-209).

The protein belongs to the TFP11/STIP family. Identified in the spliceosome C complex.

The protein localises to the nucleus. In terms of biological role, involved in pre-mRNA splicing, specifically in spliceosome disassembly during late-stage splicing events. This is Tuftelin-interacting protein 11 (tfip11) from Danio rerio (Zebrafish).